The primary structure comprises 401 residues: S-adenosylmethionine synthase (401 aa).

Residue Gly-136–Asp-141 coordinates ATP. Residues Gly-278–Ser-305 are disordered.

This sequence belongs to the AdoMet synthase 2 family. The cofactor is Mg(2+).

It carries out the reaction L-methionine + ATP + H2O = S-adenosyl-L-methionine + phosphate + diphosphate. It participates in amino-acid biosynthesis; S-adenosyl-L-methionine biosynthesis; S-adenosyl-L-methionine from L-methionine: step 1/1. Functionally, catalyzes the formation of S-adenosylmethionine from methionine and ATP. The polypeptide is S-adenosylmethionine synthase (Methanococcoides burtonii (strain DSM 6242 / NBRC 107633 / OCM 468 / ACE-M)).